The primary structure comprises 239 residues: Ribonuclease 3 (239 aa).

The region spanning 12-137 (RLTLEAAIGH…LIAALYLDGG (126 aa)) is the RNase III domain. Position 50 (E50) interacts with Mg(2+). The active site involves D54. Mg(2+) contacts are provided by D123 and E126. Residue E126 is part of the active site. The region spanning 162 to 231 (DAKTELQEWA…ATRILEREGI (70 aa)) is the DRBM domain.

This sequence belongs to the ribonuclease III family. As to quaternary structure, homodimer. Mg(2+) serves as cofactor.

Its subcellular location is the cytoplasm. It carries out the reaction Endonucleolytic cleavage to 5'-phosphomonoester.. Functionally, digests double-stranded RNA. Involved in the processing of primary rRNA transcript to yield the immediate precursors to the large and small rRNAs (23S and 16S). Processes some mRNAs, and tRNAs when they are encoded in the rRNA operon. Processes pre-crRNA and tracrRNA of type II CRISPR loci if present in the organism. This chain is Ribonuclease 3, found in Rhizobium rhizogenes (strain K84 / ATCC BAA-868) (Agrobacterium radiobacter).